A 149-amino-acid chain; its full sequence is D-aminoacyl-tRNA deacylase (149 aa).

The short motif at 137–138 is the Gly-cisPro motif, important for rejection of L-amino acids element; sequence GP.

Belongs to the DTD family. As to quaternary structure, homodimer.

The protein localises to the cytoplasm. It catalyses the reaction glycyl-tRNA(Ala) + H2O = tRNA(Ala) + glycine + H(+). The catalysed reaction is a D-aminoacyl-tRNA + H2O = a tRNA + a D-alpha-amino acid + H(+). An aminoacyl-tRNA editing enzyme that deacylates mischarged D-aminoacyl-tRNAs. Also deacylates mischarged glycyl-tRNA(Ala), protecting cells against glycine mischarging by AlaRS. Acts via tRNA-based rather than protein-based catalysis; rejects L-amino acids rather than detecting D-amino acids in the active site. By recycling D-aminoacyl-tRNA to D-amino acids and free tRNA molecules, this enzyme counteracts the toxicity associated with the formation of D-aminoacyl-tRNA entities in vivo and helps enforce protein L-homochirality. This Clostridium tetani (strain Massachusetts / E88) protein is D-aminoacyl-tRNA deacylase.